The primary structure comprises 911 residues: Anoctamin-6 (911 aa).

Residues 1–301 (MQMMTRKVLL…YGEKIGIYFA (301 aa)) lie on the Cytoplasmic side of the membrane. Residues 302 to 322 (WLGYYTQMLLLAAVVGVACFL) form a helical membrane-spanning segment. The Extracellular segment spans residues 323–376 (YGYLDQDNCTWSKEVCDPDIGGQILMCPQCDRLCPFWRLNITCESSKKLCIFDS). N330 carries N-linked (GlcNAc...) asparagine glycosylation. 5 disulfide bridges follow: C331–C372, C338–C365, C349–C807, C352–C356, and C596–C601. An N-linked (GlcNAc...) asparagine glycan is attached at N362. The chain crosses the membrane as a helical span at residues 377–397 (FGTLIFAVFMGVWVTLFLEFW). Over 398–456 (KRRQAELEYEWDTVELQQEEQARPEYEAQCNHVVINEITQEEERIPFTTCGKCIRVTLC) the chain is Cytoplasmic. Residues 457–477 (ASAVFFWILLIIASVIGIIVY) traverse the membrane as a helical segment. Topologically, residues 478–510 (RLSVFIVFSTTLPKNPNGTDPIQKYLTPQMATS) are extracellular. N-linked (GlcNAc...) asparagine glycosylation is present at N494. The helical transmembrane segment at 511–531 (ITASIISFIIIMILNTIYEKV) threads the bilayer. Residues 532–552 (AIMITNFELPRTQTDYENSLT) are Cytoplasmic-facing. Residues 553–573 (MKMFLFQFVNYYSSCFYIAFF) form a helical membrane-spanning segment. Residues 574–602 (KGKFVGYPGDPVYLLGKYRSEECDPGGCL) are Extracellular-facing. A helical transmembrane segment spans residues 603-622 (LELTTQLTIIMGGKAIWNNI). The Cytoplasmic portion of the chain corresponds to 623–664 (QEVLLPWVMNLIGRYKRVSGSEKITPRWEQDYHLQPMGKLGL). Ca(2+) contacts are provided by E624, E667, and E670. The next 2 membrane-spanning stretches (helical) occupy residues 665–685 (FYEY…VASF) and 686–706 (PLAP…DAWK). Over 707–723 (LTTQFRRMVPEKAQDIG) the chain is Cytoplasmic. A helical transmembrane segment spans residues 724–744 (AWQPIMQGIAILAVVTNAMII). Residues 745–837 (AFTSDMIPRL…YWHVIAAKLA (93 aa)) are Extracellular-facing. N778, N785, and N803 each carry an N-linked (GlcNAc...) asparagine glycan. A helical membrane pass occupies residues 838-858 (FIIVMEHIIYSVKFFISYAIP). At 859–911 (DVSKITKSKIKREKYLTQKLLHESHLKDLTKNMGIIAERIGGTVDNSVRPKLE) the chain is on the cytoplasmic side.

This sequence belongs to the anoctamin family. As to quaternary structure, homodimer. As to expression, predominant expression seen in epithelial tissues. Also found in skeletal system where it is primarily expressed in osteoblasts.

It is found in the cell membrane. It catalyses the reaction a 1,2-diacyl-sn-glycero-3-phospho-L-serine(in) = a 1,2-diacyl-sn-glycero-3-phospho-L-serine(out). It carries out the reaction a beta-D-galactosyl-(1&lt;-&gt;1')-N-acylsphing-4-enine(out) = a beta-D-galactosyl-(1&lt;-&gt;1')-N-acylsphing-4-enine(in). The catalysed reaction is a 1,2-diacyl-sn-glycero-3-phosphocholine(in) = a 1,2-diacyl-sn-glycero-3-phosphocholine(out). Exhibits synergistic gating by Ca(2+) and voltage. Inhibited by some non-specific cation channel blockers such as: ruthenium red, 2-aminoethyl diphenylborinate (2APB), gadolinium and cadmium ions. In terms of biological role, small-conductance calcium-activated nonselective cation (SCAN) channel which acts as a regulator of phospholipid scrambling in platelets, osteoblasts and fetal thymocytes. Phospholipid scrambling results in surface exposure of phosphatidylserine which in platelets is essential to trigger the clotting system whereas in osteoblasts is essential for the deposition of hydroxyapatite during bone mineralization. Has calcium-dependent phospholipid scramblase activity; scrambles phosphatidylserine, phosphatidylcholine and galactosylceramide. Can generate outwardly rectifying chloride channel currents in airway epithelial cells and Jurkat T lymphocytes. The protein is Anoctamin-6 (Ano6) of Mus musculus (Mouse).